The following is a 389-amino-acid chain: Alanine racemase (389 aa).

The active-site Proton acceptor; specific for D-alanine is lysine 46. At lysine 46 the chain carries N6-(pyridoxal phosphate)lysine. Arginine 144 contributes to the substrate binding site. The active-site Proton acceptor; specific for L-alanine is tyrosine 275. Methionine 323 is a substrate binding site.

The protein belongs to the alanine racemase family. Requires pyridoxal 5'-phosphate as cofactor.

The enzyme catalyses L-alanine = D-alanine. Its pathway is amino-acid biosynthesis; D-alanine biosynthesis; D-alanine from L-alanine: step 1/1. Functionally, catalyzes the interconversion of L-alanine and D-alanine. May also act on other amino acids. This Mycolicibacterium smegmatis (strain ATCC 700084 / mc(2)155) (Mycobacterium smegmatis) protein is Alanine racemase (alr).